Here is a 680-residue protein sequence, read N- to C-terminus: Fermitin family homolog 2 (680 aa).

The interaction with membranes containing phosphatidylinositol phosphate stretch occupies residues 40–81 (HIGGVMLKLVEKLDVKKDWSDHALWWEKKRTWLLKTHWTLDK). Residues 141–162 (LKKPRDPTKKKKKKLDDQSEDE) are disordered. Ser-159, Ser-181, Ser-339, and Ser-351 each carry phosphoserine. In terms of domain architecture, FERM spans 189–661 (MTPTYDAHDG…GYIFLSTRAK (473 aa)). Positions 380 to 476 (KVFKPKKLTL…WMAACRLASK (97 aa)) constitute a PH domain. Lys-383 provides a ligand contact to a 1,2-diacyl-sn-glycero-3-phospho-(1D-myo-inositol-3,4,5-trisphosphate). Residue Ser-666 is modified to Phosphoserine.

The protein belongs to the kindlin family. Interacts with ITGB1; the interaction is inhibited in presence of ITGB1BP1. Interacts with FBLIM1. Interacts with active, unphosphorylated CTNNB1. Identified in a complex with CTNNB1 and TCF7L2/TCF4. Interacts with ILK, ITGB1 and ITGB3. Detected in adult heart muscle (at protein level). Detected in heart, skeletal muscle and testis.

It is found in the cytoplasm. The protein resides in the cell cortex. It localises to the cytoskeleton. The protein localises to the stress fiber. Its subcellular location is the cell junction. It is found in the focal adhesion. The protein resides in the membrane. It localises to the cell projection. The protein localises to the lamellipodium membrane. Its subcellular location is the nucleus. It is found in the myofibril. The protein resides in the sarcomere. It localises to the i band. The protein localises to the cell surface. Scaffolding protein that enhances integrin activation mediated by TLN1 and/or TLN2, but activates integrins only weakly by itself. Binds to membranes enriched in phosphoinositides. Enhances integrin-mediated cell adhesion onto the extracellular matrix and cell spreading; this requires both its ability to interact with integrins and with phospholipid membranes. Required for the assembly of focal adhesions. Participates in the connection between extracellular matrix adhesion sites and the actin cytoskeleton and also in the orchestration of actin assembly and cell shape modulation. Recruits FBLIM1 to focal adhesions. Plays a role in the TGFB1 and integrin signaling pathways. Stabilizes active CTNNB1 and plays a role in the regulation of transcription mediated by CTNNB1 and TCF7L2/TCF4 and in Wnt signaling. The protein is Fermitin family homolog 2 (Fermt2) of Mus musculus (Mouse).